Here is a 138-residue protein sequence, read N- to C-terminus: Large ribosomal subunit protein uL16 (138 aa).

Basic residues predominate over residues 1–13 (MLQPKRRKYRKEQ). A disordered region spans residues 1–24 (MLQPKRRKYRKEQKGRNTGKATRG).

The protein belongs to the universal ribosomal protein uL16 family. Part of the 50S ribosomal subunit.

In terms of biological role, binds 23S rRNA and is also seen to make contacts with the A and possibly P site tRNAs. In Burkholderia lata (strain ATCC 17760 / DSM 23089 / LMG 22485 / NCIMB 9086 / R18194 / 383), this protein is Large ribosomal subunit protein uL16.